Consider the following 258-residue polypeptide: 4-hydroxy-2-oxovalerate aldolase (258 aa).

The active-site Proton acceptor is the His-48. Residue Gln-149 coordinates substrate. Glu-151 contributes to the Mg(2+) binding site. Substrate is bound by residues Ala-176 and Asp-177. Asp-177 provides a ligand contact to Mg(2+).

It belongs to the HpcH/HpaI aldolase family.

It carries out the reaction (S)-4-hydroxy-2-oxopentanoate = acetaldehyde + pyruvate. Its pathway is xenobiotic degradation; biphenyl degradation. Functionally, catalyzes the reversible retro-aldol cleavage of 4-hydroxy-2-oxovalerate to pyruvate and acetaldehyde. The chain is 4-hydroxy-2-oxovalerate aldolase (bphF) from Rhodococcus jostii (strain RHA1).